Consider the following 485-residue polypeptide: Glutamyl-tRNA(Gln) amidotransferase subunit A (485 aa).

Residues Lys80 and Ser155 each act as charge relay system in the active site. Ser179 functions as the Acyl-ester intermediate in the catalytic mechanism.

It belongs to the amidase family. GatA subfamily. In terms of assembly, heterotrimer of A, B and C subunits.

It catalyses the reaction L-glutamyl-tRNA(Gln) + L-glutamine + ATP + H2O = L-glutaminyl-tRNA(Gln) + L-glutamate + ADP + phosphate + H(+). Allows the formation of correctly charged Gln-tRNA(Gln) through the transamidation of misacylated Glu-tRNA(Gln) in organisms which lack glutaminyl-tRNA synthetase. The reaction takes place in the presence of glutamine and ATP through an activated gamma-phospho-Glu-tRNA(Gln). The polypeptide is Glutamyl-tRNA(Gln) amidotransferase subunit A (Endomicrobium trichonymphae).